Here is a 98-residue protein sequence, read N- to C-terminus: UPF0235 protein Asuc_1977 (98 aa).

This sequence belongs to the UPF0235 family.

The protein is UPF0235 protein Asuc_1977 of Actinobacillus succinogenes (strain ATCC 55618 / DSM 22257 / CCUG 43843 / 130Z).